A 472-amino-acid polypeptide reads, in one-letter code: Exodeoxyribonuclease 7 large subunit (472 aa).

It belongs to the XseA family. As to quaternary structure, heterooligomer composed of large and small subunits.

Its subcellular location is the cytoplasm. It catalyses the reaction Exonucleolytic cleavage in either 5'- to 3'- or 3'- to 5'-direction to yield nucleoside 5'-phosphates.. In terms of biological role, bidirectionally degrades single-stranded DNA into large acid-insoluble oligonucleotides, which are then degraded further into small acid-soluble oligonucleotides. The protein is Exodeoxyribonuclease 7 large subunit of Carboxydothermus hydrogenoformans (strain ATCC BAA-161 / DSM 6008 / Z-2901).